Reading from the N-terminus, the 300-residue chain is uncharacterized protein (300 aa).

The segment covering 1-19 (MATKRAHPEDETHESKRAA) has biased composition (basic and acidic residues). The disordered stretch occupies residues 1–20 (MATKRAHPEDETHESKRAAQ).

This is an uncharacterized protein from Orgyia pseudotsugata multicapsid polyhedrosis virus (OpMNPV).